Reading from the N-terminus, the 335-residue chain is Methionyl-tRNA formyltransferase (335 aa).

Residue 122-125 participates in (6S)-5,6,7,8-tetrahydrofolate binding; that stretch reads SLLP. A disordered region spans residues 203-222; sequence DSHGPLGEPQDPAKVSKAPR.

Belongs to the Fmt family.

It carries out the reaction L-methionyl-tRNA(fMet) + (6R)-10-formyltetrahydrofolate = N-formyl-L-methionyl-tRNA(fMet) + (6S)-5,6,7,8-tetrahydrofolate + H(+). Its function is as follows. Attaches a formyl group to the free amino group of methionyl-tRNA(fMet). The formyl group appears to play a dual role in the initiator identity of N-formylmethionyl-tRNA by promoting its recognition by IF2 and preventing the misappropriation of this tRNA by the elongation apparatus. The protein is Methionyl-tRNA formyltransferase of Rhodopirellula baltica (strain DSM 10527 / NCIMB 13988 / SH1).